We begin with the raw amino-acid sequence, 468 residues long: 6-phosphogluconate dehydrogenase, decarboxylating (468 aa).

NADP(+) contacts are provided by residues 9–14 (GLAVMG), 32–34 (NRS), 73–75 (VQA), and Asn-101. Substrate-binding positions include Asn-101 and 127 to 129 (SGG). The active-site Proton acceptor is Lys-182. Substrate is bound at residue 185-186 (HN). Glu-189 acts as the Proton donor in catalysis. Residues Tyr-190, Lys-259, Arg-286, Arg-444, and His-450 each contribute to the substrate site.

Belongs to the 6-phosphogluconate dehydrogenase family. Homodimer.

It catalyses the reaction 6-phospho-D-gluconate + NADP(+) = D-ribulose 5-phosphate + CO2 + NADPH. The protein operates within carbohydrate degradation; pentose phosphate pathway; D-ribulose 5-phosphate from D-glucose 6-phosphate (oxidative stage): step 3/3. Catalyzes the oxidative decarboxylation of 6-phosphogluconate to ribulose 5-phosphate and CO(2), with concomitant reduction of NADP to NADPH. This chain is 6-phosphogluconate dehydrogenase, decarboxylating (gnd), found in Staphylococcus aureus (strain COL).